The following is a 328-amino-acid chain: GTPase Obg (328 aa).

The Obg domain occupies 1–159 (MNFIDEVKIY…MWVQLSLKLL (159 aa)). The OBG-type G domain maps to 160–327 (SDVGLVGLPN…IIKLALQTIK (168 aa)). Residues 166 to 173 (GLPNAGKS), 191 to 195 (FTTLV), 212 to 215 (DIPG), 279 to 282 (NKID), and 308 to 310 (STY) each bind GTP. Mg(2+)-binding residues include Ser173 and Thr193.

It belongs to the TRAFAC class OBG-HflX-like GTPase superfamily. OBG GTPase family. Monomer. It depends on Mg(2+) as a cofactor.

It localises to the cytoplasm. Functionally, an essential GTPase which binds GTP, GDP and possibly (p)ppGpp with moderate affinity, with high nucleotide exchange rates and a fairly low GTP hydrolysis rate. Plays a role in control of the cell cycle, stress response, ribosome biogenesis and in those bacteria that undergo differentiation, in morphogenesis control. This chain is GTPase Obg, found in Rickettsia bellii (strain RML369-C).